A 1502-amino-acid chain; its full sequence is Heme-responsive zinc finger transcription factor HAP1 (1502 aa).

Residues 1 to 50 (MSNTPYNSSVPSIASMTQSSVSRSPNMHTATTPGANTSSNSPPLHMSSDS) show a composition bias toward polar residues. Residues 1–56 (MSNTPYNSSVPSIASMTQSSVSRSPNMHTATTPGANTSSNSPPLHMSSDSSKIKRK) form a disordered region. The Zn(2+) site is built by C64, C67, C74, C81, C84, and C93. The zn(2)-C6 fungal-type DNA-binding region spans 64-93 (CTICRKRKVKCDKLRPHCQQCTKTGVAHLC). Residues 105 to 134 (EKELLKDNELKKLRERVKSLEKTLSKVHSS) adopt a coiled-coil conformation. The interval 126-208 (KTLSKVHSSP…ANSSSLSISN (83 aa)) is disordered. The segment covering 130–142 (KVHSSPSSNSLKS) has biased composition (low complexity). Polar residues-rich tracts occupy residues 143 to 152 (YNTPESSNLF) and 160 to 176 (TLVN…SHMH). Low complexity predominate over residues 177-208 (QQQQQQQQQEQQQDFSRSANANANSSSLSISN). Positions 244 to 444 (KGDPYLKLLW…NTIPHHQPQS (201 aa)) are heme-responsive; required for HMC formation. 6 HRM repeats span residues 280 to 285 (KCPINH), 299 to 304 (KCPVDH), 323 to 328 (KCPVDH), 347 to 352 (RCPVDH), 389 to 394 (KCPVDH), and 415 to 420 (RCPIDH). 2 stretches are compositionally biased toward polar residues: residues 432–447 (STHN…SGSH) and 706–734 (QLNA…NPTL). Disordered stretches follow at residues 432–458 (STHN…SRKH) and 706–767 (QLNA…KENQ). Residues 735 to 759 (NNNMSAATTNSSSRSGSADSRSGSN) are compositionally biased toward low complexity. Residues 1192–1197 (KCPVYQ) form an HRM 7 repeat. The tract at residues 1384–1411 (TANTDTSANGSALSTLTSPQGSDLASNS) is disordered. Residues 1388–1411 (DTSANGSALSTLTSPQGSDLASNS) show a composition bias toward polar residues.

As to quaternary structure, binds DNA as a homodimer. Interacts with SRO9 and YDJ1. In the absence of heme, binds to at least four cellular proteins, including YDJ1 and SRO9, forming a high-molecular-weight complex (HMC) which results in repression of its activity and dictates its DNA-binding specificity.

It is found in the nucleus. In terms of biological role, regulation of oxygen dependent gene expression. It modulates the expression of Iso-1 (CYP1) and Iso-2 (CYP3) cytochrome c. In response to heme, promotes transcription of genes encoding functions required for respiration, controlling oxidative damage and repression of anaerobic genes. Binds to the sequence 5'-CGGNNNTNNCGG-3'. Is non-functional in terms of iso-1 cytochrome c expression in strain S288c and its derivatives. The sequence is that of Heme-responsive zinc finger transcription factor HAP1 (HAP1) from Saccharomyces cerevisiae (strain ATCC 204508 / S288c) (Baker's yeast).